Consider the following 90-residue polypeptide: Protein LURE 1.5 (90 aa).

Positions 1–19 are cleaved as a signal peptide; it reads MKLPIIFLTLLIFVSSCTS. 2 disulfides stabilise this stretch: C58-C75 and C61-C82.

This sequence belongs to the DEFL family. Expressed in the pistil. Detected exclusively in the synergid cells.

It localises to the secreted. In terms of biological role, inactive pollen tube attractants guiding pollen tubes to the ovular micropyle. This is Protein LURE 1.5 from Arabidopsis thaliana (Mouse-ear cress).